The chain runs to 124 residues: MATINQLVRKPRVKKVVKSNVPALEACPQKRGVCTRVYTTTPKKPNSALRKVCRIRLTNGFEVTSYIGGEGHNLQEHSVVLIRGGRVKDLPGVRYHTVRGALDCAGVKDRKQGRSKYGVKRPKS.

Residue D89 is modified to 3-methylthioaspartic acid.

It belongs to the universal ribosomal protein uS12 family. In terms of assembly, part of the 30S ribosomal subunit. Contacts proteins S8 and S17. May interact with IF1 in the 30S initiation complex.

With S4 and S5 plays an important role in translational accuracy. In terms of biological role, interacts with and stabilizes bases of the 16S rRNA that are involved in tRNA selection in the A site and with the mRNA backbone. Located at the interface of the 30S and 50S subunits, it traverses the body of the 30S subunit contacting proteins on the other side and probably holding the rRNA structure together. The combined cluster of proteins S8, S12 and S17 appears to hold together the shoulder and platform of the 30S subunit. The sequence is that of Small ribosomal subunit protein uS12 from Glaesserella parasuis serovar 5 (strain SH0165) (Haemophilus parasuis).